Consider the following 198-residue polypeptide: NAD(P)H dehydrogenase (quinone) (198 aa).

Positions 4–190 (VLVLYYSAYG…EGAKYQGAHV (187 aa)) constitute a Flavodoxin-like domain. Residues 10–15 (SAYGHI) and 78–80 (TRF) each bind FMN. An NAD(+)-binding site is contributed by tyrosine 12. Tryptophan 98 is a substrate binding site. FMN-binding positions include 113–119 (SSATQHG) and histidine 134.

The protein belongs to the WrbA family. The cofactor is FMN.

The catalysed reaction is a quinone + NADH + H(+) = a quinol + NAD(+). The enzyme catalyses a quinone + NADPH + H(+) = a quinol + NADP(+). In Rhizobium johnstonii (strain DSM 114642 / LMG 32736 / 3841) (Rhizobium leguminosarum bv. viciae), this protein is NAD(P)H dehydrogenase (quinone).